A 753-amino-acid polypeptide reads, in one-letter code: MTIRSPEPEVKKVKVVVDRDTVKTSFEKWAKPGHFSRTLAKGPDTTTWIWNLHADAHDFDSHTNNLEDISRKIFSAHFGQLAIIFIWLSGMYYHGARFSNYEAWLADPTHIKPSAQIVWPIVGQEILNGDVGGGFRGIQITSGFFQIWRASGITSELQLYCTAIGALIFAALMLFAGWFHYHKAAPKLAWFQEVESMLNHHLAGLLGLGSLSWAGHQIHVSLPINQLLDAGVDPKEIPLPHEFIFNRDLLAQLYPSFAKGVTPFLTLNWSEYSDFLTFRGGLNPVTGGLWLTDTAHHHLAIAVLFLIAGHMYKTNWRIGHNLKDLLEAHKGPFTGEGHKGLYEILTTSWHAQLAVNLAMLGSLTIVVAHHMYSMPPYPYLATDYGTQLSLFTHHMWIGGFIIVGAAAHAAIFMVRDYDPTTQYNNLLDRVLRHRDAIVSHLNWVCIFLGFHSFGLYIHNDTMSALGRPQDMFSDTAIQLQPIFAQWIQNTHASAPGSTAPGATASTSLTWGGGDLVTVGSKVALLPIPLGTADFLVHHIHAFTIHVTVLILLKGVLFARSSRLIPDKANLGFRFPCDGPGRGGTCQVSAWDHVFLGLFWMYNAISVVIFHFSWKMQSDVWGNISDQGVVTHITGGNFAQSSITINGWLRDFLWAQASQVIQSYGSSLSAYGLLFLGAHFVWAFSLMFLFSGRGYWQELIESIVWAHNKLKVAPAIQPRALSIVQGRAVGVAHYLLGGIVTTWAFFLARIIAIG.

Helical transmembrane passes span 73–96 (IFSAHFGQLAIIFIWLSGMYYHGA), 159–182 (LYCTAIGALIFAALMLFAGWFHYH), 198–222 (LNHHLAGLLGLGSLSWAGHQIHVSL), 294–312 (TAHHHLAIAVLFLIAGHMY), 349–372 (WHAQLAVNLAMLGSLTIVVAHHMY), 388–414 (LSLFTHHMWIGGFIIVGAAAHAAIFMV), 436–458 (AIVSHLNWVCIFLGFHSFGLYIH), and 534–552 (FLVHHIHAFTIHVTVLILL). Residues C576 and C585 each coordinate [4Fe-4S] cluster. The next 2 helical transmembrane spans lie at 592-613 (HVFLGLFWMYNAISVVIFHFSW) and 667-689 (LSAYGLLFLGAHFVWAFSLMFLF). Chlorophyll a' is bound at residue H678. Positions 686 and 694 each coordinate chlorophyll a. W695 lines the phylloquinone pocket. Residues 727 to 747 (AVGVAHYLLGGIVTTWAFFLA) traverse the membrane as a helical segment.

The protein belongs to the PsaA/PsaB family. As to quaternary structure, the PsaA/B heterodimer binds the P700 chlorophyll special pair and subsequent electron acceptors. PSI consists of a core antenna complex that captures photons, and an electron transfer chain that converts photonic excitation into a charge separation. The eukaryotic PSI reaction center is composed of at least 11 subunits. P700 is a chlorophyll a/chlorophyll a' dimer, A0 is one or more chlorophyll a, A1 is one or both phylloquinones and FX is a shared 4Fe-4S iron-sulfur center. serves as cofactor.

It is found in the plastid. The protein localises to the chloroplast thylakoid membrane. The catalysed reaction is reduced [plastocyanin] + hnu + oxidized [2Fe-2S]-[ferredoxin] = oxidized [plastocyanin] + reduced [2Fe-2S]-[ferredoxin]. PsaA and PsaB bind P700, the primary electron donor of photosystem I (PSI), as well as the electron acceptors A0, A1 and FX. PSI is a plastocyanin-ferredoxin oxidoreductase, converting photonic excitation into a charge separation, which transfers an electron from the donor P700 chlorophyll pair to the spectroscopically characterized acceptors A0, A1, FX, FA and FB in turn. Oxidized P700 is reduced on the lumenal side of the thylakoid membrane by plastocyanin. The chain is Photosystem I P700 chlorophyll a apoprotein A1 from Pinus thunbergii (Japanese black pine).